The chain runs to 530 residues: UDP-glucuronosyltransferase 2B7 (530 aa).

A signal peptide spans 1-17; sequence MPQKWISALLLLQISFC. A glycan (N-linked (GlcNAc...) asparagine) is linked at asparagine 316. UDP-alpha-D-glucuronate-binding positions include 374-380 and glutamate 400; that span reads THGGANG. A helical transmembrane segment spans residues 496 to 516; the sequence is IGFLLACVLAIVLLAVKCCLF.

Belongs to the UDP-glycosyltransferase family.

It is found in the endoplasmic reticulum membrane. It catalyses the reaction glucuronate acceptor + UDP-alpha-D-glucuronate = acceptor beta-D-glucuronoside + UDP + H(+). The enzyme catalyses 17alpha-estradiol + UDP-alpha-D-glucuronate = 17alpha-estradiol 17-O-(beta-D-glucuronate) + UDP + H(+). The catalysed reaction is 17beta-estradiol + UDP-alpha-D-glucuronate = 17beta-estradiol 17-O-(beta-D-glucuronate) + UDP + H(+). It carries out the reaction 2-hydroxy-17beta-estradiol + UDP-alpha-D-glucuronate = 2-hydroxy-17beta-estradiol 3-O-(beta-D-glucuronate) + UDP + H(+). It catalyses the reaction 4-hydroxy-17beta-estradiol + UDP-alpha-D-glucuronate = 17beta-estradiol 4-O-(beta-D-glucuronate) + UDP + H(+). The enzyme catalyses 4-hydroxyestrone + UDP-alpha-D-glucuronate = estrone 4-O-(beta-D-glucuronate) + UDP + H(+). The catalysed reaction is 16alpha-hydroxyestrone + UDP-alpha-D-glucuronate = 16alpha-hydroxyestrone 16-O-(beta-D-glucuronate) + UDP + H(+). It carries out the reaction 16alpha,17beta-estriol + UDP-alpha-D-glucuronate = 16alpha,17beta-estriol 16-O-(beta-D-glucuronate) + UDP + H(+). It catalyses the reaction 16beta,17beta-estriol + UDP-alpha-D-glucuronate = 16beta,17beta-estriol 16-O-(beta-D-glucuronate) + UDP + H(+). The enzyme catalyses 16alpha,17alpha-estriol + UDP-alpha-D-glucuronate = 16alpha,17alpha-estriol 16-O-(beta-D-glucuronate) + UDP + H(+). The catalysed reaction is 16alpha,17alpha-estriol + UDP-alpha-D-glucuronate = 16alpha,17alpha-estriol 17-O-(beta-D-glucuronate) + UDP + H(+). It carries out the reaction epitestosterone + UDP-alpha-D-glucuronate = epitestosterone 17-O-(beta-D-glucuronate) + UDP + H(+). It catalyses the reaction hyodeoxycholate + UDP-alpha-D-glucuronate = hyodeoxycholate 6-O-(beta-D-glucuronate) + UDP + H(+). The enzyme catalyses hyocholate + UDP-alpha-D-glucuronate = hyocholate 6-O-(beta-D-glucuronate) + UDP + H(+). The catalysed reaction is all-trans-retinoate + UDP-alpha-D-glucuronate = all-trans-retinoyl-1-O-(beta-D-glucuronate) + UDP. It carries out the reaction all-trans-4-hydroxyretinoate + UDP-alpha-D-glucuronate = all-trans-4-hydroxy-4-O-(beta-D-glucuronide)-retinoate + UDP + H(+). It catalyses the reaction (E)-ferulate + UDP-alpha-D-glucuronate = (E)-ferulic acid beta-D-glucuronate ester + UDP. The enzyme catalyses 8-iso-prostaglandin F2alpha + UDP-alpha-D-glucuronate = 8-iso-prostaglandin F2alpha-glucuronide + UDP + H(+). The catalysed reaction is 5-epi-5-F2t-IsoP + UDP-alpha-D-glucuronate = 5-epi-5-F2t-IsoP-glucuronide + UDP + H(+). It carries out the reaction (5Z,8Z,11Z,14Z)-eicosatetraenoate + UDP-alpha-D-glucuronate = O-[(5Z),(8Z),(11Z),(14Z)-eicosatetraenoyl]-beta-D-glucuronate + UDP. It catalyses the reaction 15-hydroxy-(5Z,8Z,11Z,13E)-eicosatetraenoate + UDP-alpha-D-glucuronate = 15-O-(beta-D-glucuronosyl)-(5Z,8Z,11Z,14Z)-eicosatetraenoate + UDP + H(+). The enzyme catalyses 20-hydroxy-(5Z,8Z,11Z,14Z)-eicosatetraenoate + UDP-alpha-D-glucuronate = 20-O-(beta-D-glucuronosyl)-(5Z,8Z,11Z,14Z)-eicosatetraenoate + UDP + H(+). The catalysed reaction is (E)-ferulate + UDP-alpha-D-glucuronate = (E)-4-O-(beta-D-glucuronosyl)-ferulate + UDP + H(+). It carries out the reaction prostaglandin B1 + UDP-alpha-D-glucuronate = 15-O-(beta-D-glucuronosyl)-prostaglandin B1 + UDP + H(+). It catalyses the reaction mycophenolate + UDP-alpha-D-glucuronate = mycophenolic acid O-acyl-beta-D-glucuronide + UDP. The enzyme catalyses losartan + UDP-alpha-D-glucuronate = losartan-2-N-beta-D-glucuronide + UDP. The catalysed reaction is candesartan + UDP-alpha-D-glucuronate = candesartan O-beta-D-glucuronoside + UDP. It carries out the reaction candesartan + UDP-alpha-D-glucuronate = candesartan-2-N-beta-D-glucuronide + UDP. It catalyses the reaction zolasartan + UDP-alpha-D-glucuronate = zolarsartan O-beta-D-glucuronoside + UDP. In terms of biological role, UDP-glucuronosyltransferase (UGT) that catalyzes phase II biotransformation reactions in which lipophilic substrates are conjugated with glucuronic acid to increase the metabolite's water solubility, thereby facilitating excretion into either the urine or bile. Essential for the elimination and detoxification of drugs, xenobiotics and endogenous compounds. Catalyzes the glucuronidation of endogenous steroid hormones such as androgens (epitestosterone, androsterone) and estrogens (estradiol, epiestradiol, estriol, catechol estrogens). Also regulates the levels of retinoic acid, a major metabolite of vitamin A involved in apoptosis, cellular growth and differentiation, and embryonic development. Contributes to bile acid (BA) detoxification by catalyzing the glucuronidation of BA substrates, which are natural detergents for dietary lipids absorption. Involved in the glucuronidation of arachidonic acid (AA) and AA-derived eicosanoids including 15-HETE, 20-HETE, PGE2, PGB1 and F2-isoprostanes (8-iso-PGF2alpha and 5-epi-5-F2t-IsoP). Involved in the glucuronidation of the phytochemical ferulic acid at the phenolic or the carboxylic acid group. Involved in the glucuronidation of the AGTR1 angiotensin receptor antagonist losartan, caderastan and zolarsatan, drugs which can inhibit the effect of angiotensin II. Also metabolizes mycophenolate, an immunosuppressive agent. The chain is UDP-glucuronosyltransferase 2B7 from Rattus norvegicus (Rat).